Here is a 263-residue protein sequence, read N- to C-terminus: tRNA1(Val) (adenine(37)-N6)-methyltransferase (263 aa).

Belongs to the methyltransferase superfamily. tRNA (adenine-N(6)-)-methyltransferase family.

Its subcellular location is the cytoplasm. The enzyme catalyses adenosine(37) in tRNA1(Val) + S-adenosyl-L-methionine = N(6)-methyladenosine(37) in tRNA1(Val) + S-adenosyl-L-homocysteine + H(+). Specifically methylates the adenine in position 37 of tRNA(1)(Val) (anticodon cmo5UAC). This is tRNA1(Val) (adenine(37)-N6)-methyltransferase from Pseudoalteromonas atlantica (strain T6c / ATCC BAA-1087).